Consider the following 287-residue polypeptide: Ret finger protein-like 4A-like protein 1 (287 aa).

Residues 11-53 (CPVCLKDLEEAVQLKCGYACCLQCLNSLQKEPDGEGLLCRFCS) form an RING-type; degenerate zinc finger. One can recognise a B30.2/SPRY domain in the interval 78-276 (EPKLKSVLTM…LSICSVINPS (199 aa)).

The polypeptide is Ret finger protein-like 4A-like protein 1 (RFPL4AL1) (Homo sapiens (Human)).